The primary structure comprises 102 residues: Protein iss (102 aa).

Increases serum survival and confers group II surface exclusion. The protein is Protein iss (iss) of Escherichia coli.